Here is a 219-residue protein sequence, read N- to C-terminus: Adenylate kinase (219 aa).

Gly10–Thr15 provides a ligand contact to ATP. The NMP stretch occupies residues Ser30–Val59. AMP-binding positions include Thr31, Arg36, Glu57–Val59, Gly85–Arg88, and Gln92. Residues Gly122–Asp159 form an LID region. Residues Arg123 and Val132–Tyr133 contribute to the ATP site. Residues Ser129–Pro152 are disordered. The segment covering Tyr133–Pro152 has biased composition (basic and acidic residues). Residues Arg156 and Arg167 each coordinate AMP. Gly203 lines the ATP pocket.

This sequence belongs to the adenylate kinase family. As to quaternary structure, monomer.

Its subcellular location is the cytoplasm. It carries out the reaction AMP + ATP = 2 ADP. Its pathway is purine metabolism; AMP biosynthesis via salvage pathway; AMP from ADP: step 1/1. In terms of biological role, catalyzes the reversible transfer of the terminal phosphate group between ATP and AMP. Plays an important role in cellular energy homeostasis and in adenine nucleotide metabolism. The polypeptide is Adenylate kinase (Alkalilimnicola ehrlichii (strain ATCC BAA-1101 / DSM 17681 / MLHE-1)).